We begin with the raw amino-acid sequence, 162 residues long: Xylulose kinase (162 aa).

The tract at residues 16 to 39 (GGHSATPRPATGPAGPAAHSGRHQ) is disordered. Residues 20–33 (ATPRPATGPAGPAA) show a composition bias toward low complexity.

This sequence belongs to the FGGY kinase family.

It catalyses the reaction D-xylulose + ATP = D-xylulose 5-phosphate + ADP + H(+). In terms of biological role, catalyzes the phosphorylation of D-xylulose to D-xylulose 5-phosphate. The chain is Xylulose kinase from Actinoplanes sp. (strain ATCC 31351 / 3876) (Ampullariella sp.).